We begin with the raw amino-acid sequence, 418 residues long: MSASTMKEVVYWSPKKVADWLLENAMPEYCEPLEHFTGRDLINLTQEDFTKPPLCRVSSDNGQRLLDMIETLKMEHHMEAHKNGHANGHLSIGTDVPAPDGSFSIKVKPNGMPNGYRKEMIKIPMPEPERSQYPMEWGKTFLAFLYALSCFVLTTVMISVVHERVPPKEVQPPLPDTFFDHFNRVQWAFSICEINGMILVGLWLIQWLLLKYKSIISRRFFCIVGTLYLYRCITMYVTTLPVPGMHFNCSPKLFGDWEAQLRRIMKLIAGGGLSITGSHNMCGDYLYSGHTVMLTLTYLFIKEYSPRRLWWYHWICWLLSVVGIFCILLAHDHYTVDVVVAYYITTRLFWWYHTMANQQVLKEASQMNLLARVWWYRPFQYFEKNVQGIVPRSYHWPFPWPVVHLGRQVKYSRLVNDT.

Residues 12–75 (WSPKKVADWL…LDMIETLKME (64 aa)) enclose the SAM domain. Serine 13 carries the post-translational modification Phosphoserine. Transmembrane regions (helical) follow at residues 141-161 (FLAF…ISVV), 189-209 (FSIC…QWLL), 220-240 (FFCI…VTTL), 281-301 (MCGD…YLFI), and 309-329 (LWWY…CILL). Histidine 290 is a catalytic residue. Residues histidine 333 and aspartate 337 contribute to the active site. The chain crosses the membrane as a helical span at residues 335–352 (TVDVVVAYYITTRLFWWY).

This sequence belongs to the sphingomyelin synthase family. Widely expressed. Highest expression in the cardiovascular system.

The protein localises to the golgi apparatus membrane. It carries out the reaction an N-acylsphing-4-enine + a 1,2-diacyl-sn-glycero-3-phosphocholine = a sphingomyelin + a 1,2-diacyl-sn-glycerol. The enzyme catalyses 1-(9Z-octadecenoyl)-2-acyl-sn-3-glycerol + a sphingomyelin = a 1-(9Z-octadecenoyl)-2-acyl-sn-glycero-3-phosphocholine + an N-acylsphing-4-enine. The catalysed reaction is N-hexadecanoylsphinganine + a 1,2-diacyl-sn-glycero-3-phosphocholine = N-hexadecanoyl-sphinganine-1-phosphocholine + a 1,2-diacyl-sn-glycerol. It catalyses the reaction N-hexadecanoyl-(4R)-hydroxysphinganine + a 1,2-diacyl-sn-glycero-3-phosphocholine = N-hexadecanoyl-(4R)-hydroxysphinganine-phosphocholine + a 1,2-diacyl-sn-glycerol. It carries out the reaction an N-acylsphing-4-enine + a 1,2-diacyl-sn-glycero-3-phosphoethanolamine = an N-acylsphing-4-enine 1-phosphoethanolamine + a 1,2-diacyl-sn-glycerol. It participates in sphingolipid metabolism. Major sphingomyelin synthase at the Golgi apparatus. Catalyzes the reversible transfer of phosphocholine moiety in sphingomyelin biosynthesis: in the forward reaction transfers phosphocholine head group of phosphatidylcholine (PC) on to ceramide (CER) to form ceramide phosphocholine (sphingomyelin, SM) and diacylglycerol (DAG) as by-product, and in the reverse reaction transfers phosphocholine from SM to DAG to form PC and CER. The direction of the reaction depends on the levels of CER and DAG in Golgi membranes. Converts the newly synthesized CER, that is transported from the endoplasmic reticulum to the trans-Golgi by the Cer transport protein (CERT), to SM. Can form a heteromeric complex with glucosylceramide synthase (GCS) increasing SMS activity and reducing glucosylceramide synthesis, a critical mechanism that controls the metabolic fate of CER in the Golgi. Does not use free phosphorylcholine or CDP-choline as donor. Can also transfer phosphoethanolamine head group of phosphatidylethanolamine (PE) on to CER to form ceramide phosphoethanolamine (CPE). Regulates receptor-mediated signal transduction via mitogenic DAG and proapoptotic CER, as well as via SM, a structural component of membrane rafts that serve as platforms for signal transduction and protein sorting. Plays a role in secretory transport via regulation of DAG pool at the Golgi apparatus and its downstream effects on PRKD1. This chain is Phosphatidylcholine:ceramide cholinephosphotransferase 1 (SGMS1), found in Sus scrofa (Pig).